The following is a 315-amino-acid chain: Homoserine kinase (315 aa).

Residue 97–107 (PPARGLGSSAT) coordinates ATP.

It belongs to the GHMP kinase family. Homoserine kinase subfamily.

Its subcellular location is the cytoplasm. The enzyme catalyses L-homoserine + ATP = O-phospho-L-homoserine + ADP + H(+). It participates in amino-acid biosynthesis; L-threonine biosynthesis; L-threonine from L-aspartate: step 4/5. Its function is as follows. Catalyzes the ATP-dependent phosphorylation of L-homoserine to L-homoserine phosphate. The chain is Homoserine kinase from Synechococcus sp. (strain CC9902).